A 232-amino-acid polypeptide reads, in one-letter code: DNA repair and recombination protein RadB (232 aa).

The protein belongs to the eukaryotic RecA-like protein family. RadB subfamily.

Its function is as follows. Involved in DNA repair and in homologous recombination. May regulate the cleavage reactions of the branch-structured DNA. Has a very weak ATPase activity that is not stimulated by DNA. Binds DNA but does not promote DNA strands exchange. The protein is DNA repair and recombination protein RadB of Methanosphaera stadtmanae (strain ATCC 43021 / DSM 3091 / JCM 11832 / MCB-3).